The following is a 152-amino-acid chain: Inner membrane protein YbbJ (152 aa).

A helical transmembrane segment spans residues 1–21; sequence MMELMVVHPHIFWLSLGGLLL. Topologically, residues 22 to 31 are cytoplasmic; that stretch reads AAEMLGGNGY. A helical membrane pass occupies residues 32–52; the sequence is LLWSGVAAVITGLVVWLVPLG. Topologically, residues 53 to 54 are periplasmic; the sequence is WE. A helical membrane pass occupies residues 55–75; sequence WQGVMFAILTLLAAWLWWKWL. At 76-152 the chain is on the cytoplasmic side; sequence SRRVREQKHS…ITLHIRAVSS (77 aa).

It to M.jannaschii MJ0826.

It is found in the cell inner membrane. This chain is Inner membrane protein YbbJ (ybbJ), found in Escherichia coli (strain K12).